Here is a 225-residue protein sequence, read N- to C-terminus: 7-cyano-7-deazaguanine synthase (225 aa).

10–20 (VSGGLDSTTAL) lines the ATP pocket. Residues Cys189, Cys199, Cys202, and Cys205 each contribute to the Zn(2+) site.

Belongs to the QueC family. The cofactor is Zn(2+).

It carries out the reaction 7-carboxy-7-deazaguanine + NH4(+) + ATP = 7-cyano-7-deazaguanine + ADP + phosphate + H2O + H(+). It functions in the pathway purine metabolism; 7-cyano-7-deazaguanine biosynthesis. Its function is as follows. Catalyzes the ATP-dependent conversion of 7-carboxy-7-deazaguanine (CDG) to 7-cyano-7-deazaguanine (preQ(0)). This Saccharophagus degradans (strain 2-40 / ATCC 43961 / DSM 17024) protein is 7-cyano-7-deazaguanine synthase.